We begin with the raw amino-acid sequence, 444 residues long: Methylenetetrahydrofolate--tRNA-(uracil-5-)-methyltransferase TrmFO (444 aa).

FAD is bound at residue 10 to 15; sequence GAGLAG.

The protein belongs to the MnmG family. TrmFO subfamily. FAD serves as cofactor.

The protein resides in the cytoplasm. The catalysed reaction is uridine(54) in tRNA + (6R)-5,10-methylene-5,6,7,8-tetrahydrofolate + NADH + H(+) = 5-methyluridine(54) in tRNA + (6S)-5,6,7,8-tetrahydrofolate + NAD(+). The enzyme catalyses uridine(54) in tRNA + (6R)-5,10-methylene-5,6,7,8-tetrahydrofolate + NADPH + H(+) = 5-methyluridine(54) in tRNA + (6S)-5,6,7,8-tetrahydrofolate + NADP(+). Catalyzes the folate-dependent formation of 5-methyl-uridine at position 54 (M-5-U54) in all tRNAs. The polypeptide is Methylenetetrahydrofolate--tRNA-(uracil-5-)-methyltransferase TrmFO (Streptococcus agalactiae serotype III (strain NEM316)).